A 443-amino-acid chain; its full sequence is D-inositol 3-phosphate glycosyltransferase (443 aa).

H30 serves as a coordination point for 1D-myo-inositol 3-phosphate. Residues 36-37 (QP) and G44 each bind UDP-N-acetyl-alpha-D-glucosamine. 1D-myo-inositol 3-phosphate-binding positions include 41-46 (DAGGMN), K99, Y132, T156, and R176. Positions 250, 255, and 316 each coordinate UDP-N-acetyl-alpha-D-glucosamine. F325, R326, and C328 together coordinate Mg(2+). The UDP-N-acetyl-alpha-D-glucosamine site is built by E338 and E346. T352 is a binding site for Mg(2+).

The protein belongs to the glycosyltransferase group 1 family. MshA subfamily. Homodimer.

The catalysed reaction is 1D-myo-inositol 3-phosphate + UDP-N-acetyl-alpha-D-glucosamine = 1D-myo-inositol 2-acetamido-2-deoxy-alpha-D-glucopyranoside 3-phosphate + UDP + H(+). Functionally, catalyzes the transfer of a N-acetyl-glucosamine moiety to 1D-myo-inositol 3-phosphate to produce 1D-myo-inositol 2-acetamido-2-deoxy-glucopyranoside 3-phosphate in the mycothiol biosynthesis pathway. This is D-inositol 3-phosphate glycosyltransferase from Stackebrandtia nassauensis (strain DSM 44728 / CIP 108903 / NRRL B-16338 / NBRC 102104 / LLR-40K-21).